The following is a 423-amino-acid chain: Histidine--tRNA ligase (423 aa).

It belongs to the class-II aminoacyl-tRNA synthetase family. As to quaternary structure, homodimer.

The protein localises to the cytoplasm. It catalyses the reaction tRNA(His) + L-histidine + ATP = L-histidyl-tRNA(His) + AMP + diphosphate + H(+). This Bacillus cytotoxicus (strain DSM 22905 / CIP 110041 / 391-98 / NVH 391-98) protein is Histidine--tRNA ligase.